We begin with the raw amino-acid sequence, 317 residues long: Pantothenate kinase (317 aa).

99–106 provides a ligand contact to ATP; that stretch reads GSVSVGKS.

This sequence belongs to the prokaryotic pantothenate kinase family.

It localises to the cytoplasm. The enzyme catalyses (R)-pantothenate + ATP = (R)-4'-phosphopantothenate + ADP + H(+). It participates in cofactor biosynthesis; coenzyme A biosynthesis; CoA from (R)-pantothenate: step 1/5. This chain is Pantothenate kinase, found in Histophilus somni (strain 2336) (Haemophilus somnus).